The sequence spans 169 residues: Ribosome maturation factor RimM (169 aa).

The 77-residue stretch at 91–167 (EGEYYFADLI…RIVIATDFAH (77 aa)) folds into the PRC barrel domain.

This sequence belongs to the RimM family. In terms of assembly, binds ribosomal protein uS19.

The protein resides in the cytoplasm. Its function is as follows. An accessory protein needed during the final step in the assembly of 30S ribosomal subunit, possibly for assembly of the head region. Essential for efficient processing of 16S rRNA. May be needed both before and after RbfA during the maturation of 16S rRNA. It has affinity for free ribosomal 30S subunits but not for 70S ribosomes. This Erythrobacter litoralis (strain HTCC2594) protein is Ribosome maturation factor RimM.